Here is a 313-residue protein sequence, read N- to C-terminus: MEKFKAVLDLQRKHRNALGYSLVTLLTAGGEKIFSSVVFQCPCTATWNLPYGLVFLLVPALALFLLGYALSARTWRLLTGCCSRSARFSSGLRSAFVCAQLSMTAAFAPLTWVAVALLEGSFYQCAVSGSARLAPYLCKGRDPNCNATLPQAPCNKQKVEMQEILSQLKAQSQVFGWILIAAVIILLLLVKSVTRCFSPVSYLQLKFWEIYWEKEKQILQNQAAENATQLAEENVRCFFECSKPKECNTPSSKDWQEISALYTFNPKNQFYSMLHKYVSREEMSGSVRSVEGDAVIPALGFVDDMSMTNTHEL.

Residues 1 to 21 lie on the Cytoplasmic side of the membrane; sequence MEKFKAVLDLQRKHRNALGYS. A helical membrane pass occupies residues 22–37; that stretch reads LVTLLTAGGEKIFSSV. Residues 38–46 lie on the Extracellular side of the membrane; that stretch reads VFQCPCTAT. 3 disulfide bridges follow: C41/C125, C43/C154, and C138/C145. The helical transmembrane segment at 47–68 threads the bilayer; sequence WNLPYGLVFLLVPALALFLLGY. Topologically, residues 69 to 101 are cytoplasmic; it reads ALSARTWRLLTGCCSRSARFSSGLRSAFVCAQL. The helical transmembrane segment at 102 to 126 threads the bilayer; sequence SMTAAFAPLTWVAVALLEGSFYQCA. The Extracellular segment spans residues 127-167; the sequence is VSGSARLAPYLCKGRDPNCNATLPQAPCNKQKVEMQEILSQ. A helical membrane pass occupies residues 168–190; that stretch reads LKAQSQVFGWILIAAVIILLLLV. Topologically, residues 191 to 313 are cytoplasmic; sequence KSVTRCFSPV…DMSMTNTHEL (123 aa).

The protein belongs to the CALHM family. As to quaternary structure, oligomerizes to form decameric and undecameric channels. N-glycosylated. As to expression, immune cells in primary and secondary lymphoid organs.

The protein resides in the cell membrane. The enzyme catalyses ATP(in) = ATP(out). With respect to regulation, inhibited by Gd(3+). Partially inhibited by divalent ions Ca(2+) and Ba(2+). Its function is as follows. Pore-forming subunit of an ATP-permeable channel. In response to pathogen-derived and proinflammatory stimuli, relocates from intracellular compartments to NK-dendritic cell and NK-macrophage immune synapses where it mediates ATP efflux and NK cell activation involved in antimicrobial and antitumor responses. May assemble to form gap junction channel-like structures with gating and ion conductance likely regulated by membrane lipids and voltage rather than by extracellular calcium levels. This is Calcium homeostasis modulator protein 6 from Mus musculus (Mouse).